The following is a 219-amino-acid chain: uncharacterized protein (219 aa).

Residues 139–154 (PRKIKQKKKTKKKRPS) are compositionally biased toward basic residues. The interval 139 to 160 (PRKIKQKKKTKKKRPSKSAPKT) is disordered. A LysM domain is found at 159–217 (KTYTVKKGDTLWDLAGKFYGDSTKWRKIWKVNKKAMIKRSKRNIRQPGHWIFPGQKLKI).

This is an uncharacterized protein from Bacillus subtilis (strain 168).